Here is a 354-residue protein sequence, read N- to C-terminus: Chaperone protein dnaJ 49 (354 aa).

The J domain occupies 99 to 163 (DYYAILGLEK…NSRRQFDQVG (65 aa)). A helical membrane pass occupies residues 237 to 257 (CLTIIQILPFFLLLLLAYLPF).

The protein belongs to the DnaJ family. C/III subfamily.

The protein localises to the membrane. Its function is as follows. Plays a continuous role in plant development probably in the structural organization of compartments. This Arabidopsis thaliana (Mouse-ear cress) protein is Chaperone protein dnaJ 49 (ATJ49).